The sequence spans 86 residues: RNA-binding protein Hfq (86 aa).

One can recognise a Sm domain in the interval 9 to 68 (DPYLNTLRKEKVPVSIYLVNGIKLQGQIESFDQFVVLLKNTVSQMVYKHAISTVVPARPV). The segment at 66–86 (RPVRLPSPSDAEHGDSEPGNA) is disordered. Residues 75–86 (DAEHGDSEPGNA) are compositionally biased toward basic and acidic residues.

The protein belongs to the Hfq family. In terms of assembly, homohexamer.

Functionally, RNA chaperone that binds small regulatory RNA (sRNAs) and mRNAs to facilitate mRNA translational regulation in response to envelope stress, environmental stress and changes in metabolite concentrations. Also binds with high specificity to tRNAs. In Pseudomonas entomophila (strain L48), this protein is RNA-binding protein Hfq.